The chain runs to 78 residues: Protein DsvD (78 aa).

It to A.fulgidus DsrD.

May play an essential role in dissimilatory sulfite reduction. The protein is Protein DsvD (dsvD) of Nitratidesulfovibrio vulgaris (strain ATCC 29579 / DSM 644 / CCUG 34227 / NCIMB 8303 / VKM B-1760 / Hildenborough) (Desulfovibrio vulgaris).